A 782-amino-acid chain; its full sequence is Formin-like protein 9 (782 aa).

The N-terminal stretch at 1-24 (MQNFWFAIFFFLLTCAPPSPLSYA) is a signal peptide. A helical transmembrane segment spans residues 102 to 122 (LLLPALSAVLVIATVIGLALF). 3 disordered regions span residues 191–223 (DSPEIRPLPPLPPRSFHHNNYETEVNEEDEEEE), 264–287 (MSPPNPRYSDATNLQSPSPERLRV), and 387–407 (SSSQQSKVPALPPPTRPPPLV). Acidic residues predominate over residues 214 to 223 (EVNEEDEEEE). Pro residues predominate over residues 396-407 (ALPPPTRPPPLV). Residues 406 to 782 (LVPPSQPFVV…LDQVCKEMGD (377 aa)) form the FH2 domain.

It belongs to the formin-like family. Class-I subfamily.

It is found in the membrane. Functionally, might be involved in the organization and polarity of the actin cytoskeleton. The protein is Formin-like protein 9 (FH9) of Arabidopsis thaliana (Mouse-ear cress).